Reading from the N-terminus, the 385-residue chain is Alkanesulfonate monooxygenase 2 (385 aa).

It belongs to the SsuD family.

It carries out the reaction an alkanesulfonate + FMNH2 + O2 = an aldehyde + FMN + sulfite + H2O + 2 H(+). Functionally, catalyzes the desulfonation of aliphatic sulfonates. This chain is Alkanesulfonate monooxygenase 2 (ssuD2), found in Mesorhizobium japonicum (strain LMG 29417 / CECT 9101 / MAFF 303099) (Mesorhizobium loti (strain MAFF 303099)).